Reading from the N-terminus, the 243-residue chain is Leucyl/phenylalanyl-tRNA--protein transferase (243 aa).

The protein belongs to the L/F-transferase family.

It is found in the cytoplasm. The catalysed reaction is N-terminal L-lysyl-[protein] + L-leucyl-tRNA(Leu) = N-terminal L-leucyl-L-lysyl-[protein] + tRNA(Leu) + H(+). The enzyme catalyses N-terminal L-arginyl-[protein] + L-leucyl-tRNA(Leu) = N-terminal L-leucyl-L-arginyl-[protein] + tRNA(Leu) + H(+). It carries out the reaction L-phenylalanyl-tRNA(Phe) + an N-terminal L-alpha-aminoacyl-[protein] = an N-terminal L-phenylalanyl-L-alpha-aminoacyl-[protein] + tRNA(Phe). In terms of biological role, functions in the N-end rule pathway of protein degradation where it conjugates Leu, Phe and, less efficiently, Met from aminoacyl-tRNAs to the N-termini of proteins containing an N-terminal arginine or lysine. The sequence is that of Leucyl/phenylalanyl-tRNA--protein transferase from Xylella fastidiosa (strain 9a5c).